The sequence spans 143 residues: Large ribosomal subunit protein uL16 (143 aa).

It belongs to the universal ribosomal protein uL16 family. Part of the 50S ribosomal subunit.

Functionally, binds 23S rRNA and is also seen to make contacts with the A and possibly P site tRNAs. The chain is Large ribosomal subunit protein uL16 from Tropheryma whipplei (strain TW08/27) (Whipple's bacillus).